Here is a 150-residue protein sequence, read N- to C-terminus: Sulfur-rich protein, serovars L1/L3 (150 aa).

The interval 1–20 is disordered; it reads MSTVPVVQGAGSSNSAQDIS. The next 2 helical transmembrane spans lie at 43–63 and 69–89; these read VGLVVMGLLLVMATIFLVSAA and IYLAIPAIVGCVNICVGILSM.

Its subcellular location is the membrane. The chain is Sulfur-rich protein, serovars L1/L3 (srp) from Chlamydia trachomatis.